The chain runs to 319 residues: Epoxyqueuosine reductase (319 aa).

The Proton donor role is filled by Asp146. One can recognise a 4Fe-4S ferredoxin-type domain in the interval 188–220 (ASLPADQPARSLCGHCQRCLPACPTAAITEPFV). Residues Cys200, Cys203, Cys206, Cys210, Cys226, Cys250, Cys253, and Cys257 each coordinate [4Fe-4S] cluster.

The protein belongs to the QueG family. Monomer. The cofactor is cob(II)alamin. [4Fe-4S] cluster is required as a cofactor.

The protein resides in the cytoplasm. It catalyses the reaction epoxyqueuosine(34) in tRNA + AH2 = queuosine(34) in tRNA + A + H2O. The protein operates within tRNA modification; tRNA-queuosine biosynthesis. In terms of biological role, catalyzes the conversion of epoxyqueuosine (oQ) to queuosine (Q), which is a hypermodified base found in the wobble positions of tRNA(Asp), tRNA(Asn), tRNA(His) and tRNA(Tyr). The chain is Epoxyqueuosine reductase from Synechococcus sp. (strain RCC307).